Here is a 550-residue protein sequence, read N- to C-terminus: Luciferin 4-monooxygenase (550 aa).

Positions 548 to 550 (SKL) match the Microbody targeting signal motif.

The protein belongs to the ATP-dependent AMP-binding enzyme family. Mg(2+) serves as cofactor.

Its subcellular location is the peroxisome. The catalysed reaction is firefly D-luciferin + ATP + O2 = firefly oxyluciferin + hnu + AMP + CO2 + diphosphate. Produces green light with a wavelength of 562 nm. In Photinus pyralis (Common eastern firefly), this protein is Luciferin 4-monooxygenase.